The chain runs to 38 residues: Large ribosomal subunit protein bL36 (38 aa).

Belongs to the bacterial ribosomal protein bL36 family.

The sequence is that of Large ribosomal subunit protein bL36 from Synechocystis sp. (strain ATCC 27184 / PCC 6803 / Kazusa).